The sequence spans 229 residues: Small ribosomal subunit protein uS3c (229 aa).

One can recognise a KH type-2 domain in the interval 39–128 (LRDNLFKQYP…RIILTILKVQ (90 aa)).

It belongs to the universal ribosomal protein uS3 family. As to quaternary structure, part of the 30S ribosomal subunit.

It localises to the plastid. It is found in the chloroplast. This Tupiella akineta (Green alga) protein is Small ribosomal subunit protein uS3c (rps3).